The following is a 203-amino-acid chain: Arcadin-2 (203 aa).

In terms of assembly, interacts with crenactin.

The protein resides in the cytoplasm. The protein localises to the cytoskeleton. Its function is as follows. Part of an actin-like archaeal cytoskeleton. Prevents polymerization of crenactin filaments by binding its C-terminus into crenactin's hydrophobic groove. May act by competing with the D-loop of the following crenactin subunit for the hydrophobic groove. The chain is Arcadin-2 from Pyrobaculum calidifontis (strain DSM 21063 / JCM 11548 / VA1).